A 733-amino-acid polypeptide reads, in one-letter code: MATKFPKFSQGLASDPTTRRIWFGIATAHDFETHDGMTEEKLYQKIFASHFGQLAIIFLWTSGNLFHVAWQGNFEKWGEDPLHVRPIAHTIWDPHFGQPAVEAFTRGGASAPVNIAYSGVYQWWYTIGMRTNVDLYNGSLFLLFVAGLFLFAGWLHLQPTFAPAVSWFKNAESRLNHHLSGLFGVSSLAWTGHLVHVAIPASRGETVRWDNFLTTLPHPAGLAPFFTGQWAVYAQNPDTAGHIFGTSEGAGTAILTFLGGFHPQTQSLWLTDMAHHHLAIAVVFIIAGHQYRTNFGIGHSMKEILEAHTAPSGRLGAGHTGLFDTVNNSLHFQLGLALASVGVLCSLTAQHMYSMPPYAFLAQDFTTQAALYSHHQYIAGFIMCGAFAHGAIFFIRDYDPEANKGNVLARMLEHKEAIISHLSWVSLFLGFHTLGLYVHNDVMQAFGTPEKQILIEPVFAQWIQAAQGKALYGFDILLSGDNAATAAGNSIYLPGWLAGINSSTNSLFLPIGPGDFLVHHAIALGLHTTTLILVKGALDARGSKLMPDKKDFGYSFPCDGPGRGGTCDISAWDAFYLAVFWELNTVSWTVFYFHWKHLALWQGNSAQFDESSTYIMGWLRDYLWLNSSQLINGYNPFGMNSLSVWAWMFLFGHLIYATGFMFLISWRGYWQELIETLVWAHERTPLANFVKWNDKPVALSIVQARLVGLTHFAVGFVLTYAAFVIASTSGKFG.

The next 8 membrane-spanning stretches (helical) occupy residues 46–69 (IFAS…FHVA), 135–158 (LYNG…LHLQ), 175–199 (LNHH…HVAI), 273–291 (MAHH…GHQY), 330–353 (LHFQ…QHMY), 369–395 (AALY…IFFI), 417–439 (AIIS…LYVH), and 516–534 (FLVH…LILV). The [4Fe-4S] cluster site is built by Cys-558 and Cys-567. Transmembrane regions (helical) follow at residues 574–595 (AFYL…YFHW) and 642–664 (LSVW…MFLI). The chlorophyll a site is built by His-653, Met-661, and Tyr-669. Trp-670 is a phylloquinone binding site. The chain crosses the membrane as a helical span at residues 706–726 (LVGLTHFAVGFVLTYAAFVIA).

This sequence belongs to the PsaA/PsaB family. In terms of assembly, the PsaA/B heterodimer binds the P700 chlorophyll special pair and subsequent electron acceptors. PSI consists of a core antenna complex that captures photons, and an electron transfer chain that converts photonic excitation into a charge separation. The eukaryotic PSI reaction center is composed of at least 11 subunits. P700 is a chlorophyll a/chlorophyll a' dimer, A0 is one or more chlorophyll a, A1 is one or both phylloquinones and FX is a shared 4Fe-4S iron-sulfur center. is required as a cofactor.

It localises to the plastid. Its subcellular location is the chloroplast thylakoid membrane. It catalyses the reaction reduced [plastocyanin] + hnu + oxidized [2Fe-2S]-[ferredoxin] = oxidized [plastocyanin] + reduced [2Fe-2S]-[ferredoxin]. PsaA and PsaB bind P700, the primary electron donor of photosystem I (PSI), as well as the electron acceptors A0, A1 and FX. PSI is a plastocyanin/cytochrome c6-ferredoxin oxidoreductase, converting photonic excitation into a charge separation, which transfers an electron from the donor P700 chlorophyll pair to the spectroscopically characterized acceptors A0, A1, FX, FA and FB in turn. Oxidized P700 is reduced on the lumenal side of the thylakoid membrane by plastocyanin or cytochrome c6. The polypeptide is Photosystem I P700 chlorophyll a apoprotein A2 (Ostreococcus tauri).